The primary structure comprises 445 residues: MLRLITQLSEAQTEIKRIAARTHSEQVQHQEATVREILQNVRRQGDEALLRYTLEFDQVRLAPGDLVVGAAELDAAYQRVSTSLLKAIRLAKQRIEQFHRERICKSWVQFQDRGIVLGRRYTPVDAAGLYIPGGRASYPSSVLMSAIPAVVAGVPRIVLVTPPNPEGKINPAVLVAAQESGVHEIYRIGGAQAIGALTYGTRTIAPVSVIAGPGNIYVTLAKKLVYGEVGIDSLAGPSEVLIIADSTANPVFLAADMLAQAEHDSLASAILITPDGRLAERTIEAVDRQLENHPRRTLTEKSLANYGLVIVTADLAEAAALSNLFAPEHLELEVEDPWELLEKVRHAGAIFLGHATPEAVGDYLAGPSHILPTSGTARYASGVGVETFQKCSSLVQYTPQALAEVGEAIDALTAAEGLPSHGDSVRLRLQQYENPHSPTQQQQEE.

3 residues coordinate NAD(+): Y130, Q192, and N215. S238, Q260, and H263 together coordinate substrate. Zn(2+) contacts are provided by Q260 and H263. Active-site proton acceptor residues include E328 and H329. Residues H329, D362, E416, and H421 each coordinate substrate. Residue D362 participates in Zn(2+) binding. H421 is a binding site for Zn(2+).

The protein belongs to the histidinol dehydrogenase family. Requires Zn(2+) as cofactor.

The catalysed reaction is L-histidinol + 2 NAD(+) + H2O = L-histidine + 2 NADH + 3 H(+). Its pathway is amino-acid biosynthesis; L-histidine biosynthesis; L-histidine from 5-phospho-alpha-D-ribose 1-diphosphate: step 9/9. Functionally, catalyzes the sequential NAD-dependent oxidations of L-histidinol to L-histidinaldehyde and then to L-histidine. The sequence is that of Histidinol dehydrogenase from Gloeobacter violaceus (strain ATCC 29082 / PCC 7421).